The primary structure comprises 456 residues: Ribosomal RNA small subunit methyltransferase F (456 aa).

Residues 109–115 (AAAPGGK), glutamate 133, arginine 138, and aspartate 177 each bind S-adenosyl-L-methionine. Catalysis depends on cysteine 230, which acts as the Nucleophile.

Belongs to the class I-like SAM-binding methyltransferase superfamily. RsmB/NOP family.

The protein localises to the cytoplasm. It catalyses the reaction cytidine(1400) in 16S rRNA + S-adenosyl-L-methionine = 5-methylcytidine(1400) in 16S rRNA + S-adenosyl-L-homocysteine + H(+). The enzyme catalyses cytidine(1404) in 16S rRNA + S-adenosyl-L-methionine = 5-methylcytidine(1404) in 16S rRNA + S-adenosyl-L-homocysteine + H(+). It carries out the reaction cytidine(1407) in 16S rRNA + S-adenosyl-L-methionine = 5-methylcytidine(1407) in 16S rRNA + S-adenosyl-L-homocysteine + H(+). Specifically methylates the cytosines at positions 1400 (m5C1400), 1404 (m5C1404) and 1407 (m5C1407) of 16S rRNA. C1400, C1404 and C1407 are methylated in a 30S subunit substrate, but only C1400 and C1404 are methylated when naked 16S rRNA is the substrate. Methylation by RsmF may facilitate growth at temperatures outside the optimal growth temperature. The chain is Ribosomal RNA small subunit methyltransferase F from Thermus thermophilus (strain ATCC 27634 / DSM 579 / HB8).